Here is a 552-residue protein sequence, read N- to C-terminus: MGFDVLLDQVGGMGRFQICLIAFFCITNILLFPNIVLENFTAFTPSHRCWVPLLDNDTVSDNDTGTLSKDDLLRISIPLDSNLRPQKCQRFIHPQWQLLHLNGTFPNTNEPDTEPCVDGWVYDRSSFLSTIVTEWDLVCESQSLKSMVQSLFMAGSLLGGLIYGHLSDRVGRKIICKLCFLQLAISNTCAAFAPTFLVYCILRFLAGFSTMTILGNTFILSLEWTLPRSRSMTIMVLLCSYSVGQMLLGGLAFAIQDWHILQLTVSTPIIVLFLSSWKMVESARWLIINNQLDEGLKELRRVAHINGKKNTEETLTTELVRSTMKKELDAVRIKTSIFSLFRAPKLRMRVFGLCFVRFAITVPFYGLILNLQHLGSNVSLFQILCGAVTFTARCVSLLTLNHMGRRISQILFTFPVGLFILVNTFLPQEMQILRVVLATLGIGSVSAASNSASVHHNELVPTILRSTVAGINAVSGRTGAALAPLLMTLMAYSPHLPWISYGVFPILAVPVILLLPETRDLPLPNTIQDVENDRKDSRNIKQEDTCMKVTQF.

A run of 12 helical transmembrane segments spans residues 16–36 (FQICLIAFFCITNILLFPNIV), 146–166 (SMVQSLFMAGSLLGGLIYGHL), 178–200 (LCFLQLAISNTCAAFAPTFLVYC), 204–226 (FLAGFSTMTILGNTFILSLEWTL), 234–254 (IMVLLCSYSVGQMLLGGLAFA), 260–280 (ILQLTVSTPIIVLFLSSWKMV), 350–370 (VFGLCFVRFAITVPFYGLILN), 380–400 (LFQILCGAVTFTARCVSLLTL), 407–427 (ISQILFTFPVGLFILVNTFLP), 435–455 (VVLATLGIGSVSAASNSASVH), 474–492 (VSGRTGAALAPLLMTLMAY), and 496–516 (LPWISYGVFPILAVPVILLLP).

The protein belongs to the major facilitator (TC 2.A.1) superfamily. Organic cation transporter (TC 2.A.1.19) family. In terms of tissue distribution, localized to the kidney. Highly specific expression pattern in the nephron, localized to segment 3 of the proximal tubule.

Its subcellular location is the cell membrane. The enzyme catalyses estrone 3-sulfate(out) + glutarate(in) = estrone 3-sulfate(in) + glutarate(out). It carries out the reaction 17beta-estradiol 17-O-(beta-D-glucuronate)(out) + glutarate(in) = 17beta-estradiol 17-O-(beta-D-glucuronate)(in) + glutarate(out). The catalysed reaction is taurocholate(out) + glutarate(in) = taurocholate(in) + glutarate(out). It catalyses the reaction 5alpha-androstane-3alpha,17beta-diol 3-O-(beta-D-glucuronate)(out) + glutarate(in) = 5alpha-androstane-3alpha,17beta-diol 3-O-(beta-D-glucuronate)(in) + glutarate(out). The enzyme catalyses glycocholate(out) + glutarate(in) = glycocholate(in) + glutarate(out). It carries out the reaction dehydroepiandrosterone 3-sulfate(out) + glutarate(in) = dehydroepiandrosterone 3-sulfate(in) + glutarate(out). The catalysed reaction is glutarate(in) + succinate(out) = glutarate(out) + succinate(in). With respect to regulation, transport is chloride sensitive and transtimulated by glutaric acid. Transport is inhibited by anionic compounds from different chemical classes. In terms of biological role, renal transmembrane organic anion/dicarboxylate exchanger that participates in the reabsorption of conjugated steroids including estradiol-17beta-D-glucuronide (or 17beta-estradiol 17-O-(beta-D-glucuronate)), androstanediol glucuronide (or 5alpha-androstane-3alpha,17beta-diol 3-O-(beta-D-glucuronate)), and estrone 3-sulfate, as well as bile acids taurocholate and glycocholate, driven by an outward gradient of dicarboxylates such as glutarate or succinate. Its function is as follows. Similar uptake function as Isoform 1. Lack of transporter activity. The chain is Steroid transmembrane transporter SLC22A24 from Homo sapiens (Human).